Here is a 356-residue protein sequence, read N- to C-terminus: Phospho-N-acetylmuramoyl-pentapeptide-transferase (356 aa).

The next 10 helical transmembrane spans lie at Gln3–Ile23, Thr51–Ile71, Gly80–Ile100, Ala114–Pro134, Phe152–Met172, Leu185–Phe205, Pro227–Trp247, Ile254–Leu274, Phe279–Val299, and Phe333–Ala353.

The protein belongs to the glycosyltransferase 4 family. MraY subfamily. Mg(2+) serves as cofactor.

The protein localises to the cell membrane. It carries out the reaction UDP-N-acetyl-alpha-D-muramoyl-L-alanyl-gamma-D-glutamyl-meso-2,6-diaminopimeloyl-D-alanyl-D-alanine + di-trans,octa-cis-undecaprenyl phosphate = di-trans,octa-cis-undecaprenyl diphospho-N-acetyl-alpha-D-muramoyl-L-alanyl-D-glutamyl-meso-2,6-diaminopimeloyl-D-alanyl-D-alanine + UMP. It participates in cell wall biogenesis; peptidoglycan biosynthesis. Catalyzes the initial step of the lipid cycle reactions in the biosynthesis of the cell wall peptidoglycan: transfers peptidoglycan precursor phospho-MurNAc-pentapeptide from UDP-MurNAc-pentapeptide onto the lipid carrier undecaprenyl phosphate, yielding undecaprenyl-pyrophosphoryl-MurNAc-pentapeptide, known as lipid I. The polypeptide is Phospho-N-acetylmuramoyl-pentapeptide-transferase (Streptomyces griseus subsp. griseus (strain JCM 4626 / CBS 651.72 / NBRC 13350 / KCC S-0626 / ISP 5235)).